The primary structure comprises 189 residues: Dual specificity phosphatase 29 (189 aa).

One can recognise a Tyrosine-protein phosphatase domain in the interval 33–182 (HVNEVWPGVY…LRELDTHLQE (150 aa)). 126–133 (HCVMGRSR) is a substrate binding site. C127 functions as the Phosphocysteine intermediate in the catalytic mechanism.

It belongs to the protein-tyrosine phosphatase family. Non-receptor class dual specificity subfamily.

The protein localises to the cytoplasm. The protein resides in the nucleus. The catalysed reaction is O-phospho-L-tyrosyl-[protein] + H2O = L-tyrosyl-[protein] + phosphate. It carries out the reaction O-phospho-L-seryl-[protein] + H2O = L-seryl-[protein] + phosphate. The enzyme catalyses O-phospho-L-threonyl-[protein] + H2O = L-threonyl-[protein] + phosphate. Dual specificity phosphatase able to dephosphorylate phosphotyrosine, phosphoserine and phosphothreonine residues within the same substrate, with a preference for phosphotyrosine as a substrate. Involved in the modulation of AMPK and MAPK1/2 signaling pathways. The chain is Dual specificity phosphatase 29 (dusp29) from Danio rerio (Zebrafish).